The chain runs to 436 residues: Histone acetyltransferase type B subunit 2 (436 aa).

Over residues 1-19 (MEPYDDGFIEEQEEQEEER) the composition is skewed to acidic residues. A disordered region spans residues 1-22 (MEPYDDGFIEEQEEQEEERTEE). 5 WD repeats span residues 136 to 176 (DHKG…SLPT), 187 to 227 (GHTK…KGNK), 237 to 277 (HHSS…TTRA), 284 to 324 (QHRD…TKLH), and 328 to 368 (CHTD…EEQT). Residues 370 to 374 (DDAQD) are interaction with the histone H4 N-terminus. The WD 6 repeat unit spans residues 385–425 (GHTNRISDFSWNLNDPWVLCSAAEDNLLQVWKVADAIVGKD).

Belongs to the WD repeat RBAP46/RBAP48/MSI1 family. Component of the HAT-B complex composed of at least hat1 and hat2. The HAT-B complex binds to histone H4 tail.

The protein localises to the cytoplasm. The protein resides in the nucleus. Regulatory subunit of the histone acetylase B (HAT-B) complex. The complex acetylates 'Lys-12' of histone H4 which is required for telomeric silencing. In Aspergillus oryzae (strain ATCC 42149 / RIB 40) (Yellow koji mold), this protein is Histone acetyltransferase type B subunit 2 (hat2).